Reading from the N-terminus, the 579-residue chain is uncharacterized protein (579 aa).

The protein belongs to the UbiD family.

This is an uncharacterized protein from Chlamydia muridarum (strain MoPn / Nigg).